Consider the following 510-residue polypeptide: Zinc finger and SCAN domain-containing protein 18 (510 aa).

Residues 1–40 (MLPLEKAFASPRSSPAPPDLPTPGSAAGVQQEEPETIPER) form a disordered region. Positions 49-131 (RLRFREFVYQ…SLVEGLADVL (83 aa)) constitute an SCAN box domain. Disordered regions lie at residues 172-191 (ALGAGEIPAPSETPWLSPDP), 201-231 (EAKTEEDGPANTEQKLKSFPEDPQHLGEWGH), 263-413 (TEEL…GKPY), and 461-510 (KTHE…EAQR). Composition is skewed to basic and acidic residues over residues 214–231 (QKLKSFPEDPQHLGEWGH) and 263–273 (TEELRLVERDP). The span at 288 to 299 (AGCACEEAAPAG) shows a compositional bias: low complexity. A compositionally biased stretch (polar residues) spans 344–356 (DSATGSQRQSVIQ). 2 C2H2-type zinc fingers span residues 413–435 (YACGECGEAFAWLSHLMEHHSSH) and 441–463 (YACQGCWKTFHFSLALAEHQKTH). Over residues 491 to 501 (GGPPESVEGEA) the composition is skewed to low complexity.

This sequence belongs to the krueppel C2H2-type zinc-finger protein family.

The protein resides in the nucleus. Functionally, may be involved in transcriptional regulation. The sequence is that of Zinc finger and SCAN domain-containing protein 18 (ZSCAN18) from Homo sapiens (Human).